We begin with the raw amino-acid sequence, 755 residues long: Polyribonucleotide nucleotidyltransferase (755 aa).

Mg(2+) is bound by residues aspartate 482 and aspartate 488. The KH domain maps to proline 549–methionine 608. The 69-residue stretch at glycine 618–arginine 686 folds into the S1 motif domain. The span at asparagine 702–tyrosine 714 shows a compositional bias: basic and acidic residues. The interval asparagine 702–tyrosine 755 is disordered. Basic residues predominate over residues lysine 722–histidine 731.

The protein belongs to the polyribonucleotide nucleotidyltransferase family. Mg(2+) is required as a cofactor.

The protein resides in the cytoplasm. It carries out the reaction RNA(n+1) + phosphate = RNA(n) + a ribonucleoside 5'-diphosphate. Functionally, involved in mRNA degradation. Catalyzes the phosphorolysis of single-stranded polyribonucleotides processively in the 3'- to 5'-direction. In Wolbachia sp. subsp. Brugia malayi (strain TRS), this protein is Polyribonucleotide nucleotidyltransferase.